Consider the following 285-residue polypeptide: Probable xyloglucan endotransglucosylase/hydrolase protein 12 (285 aa).

A signal peptide spans 1 to 25 (MAAFATKQSPLLLASLLILIGVATG). The GH16 domain maps to 26 to 215 (SFYDSFDITW…WTNAPFSASY (190 aa)). Glu-101 functions as the Nucleophile in the catalytic mechanism. Glu-105 serves as the catalytic Proton donor. A xyloglucan-binding site is contributed by Glu-105. A glycan (N-linked (GlcNAc...) asparagine) is linked at Asn-109. Xyloglucan is bound by residues 118-120 (HTN), 128-130 (NRE), 194-195 (DW), and Gly-199. 2 cysteine pairs are disulfide-bonded: Cys-224-Cys-235 and Cys-268-Cys-282. Xyloglucan is bound at residue Arg-273.

The protein belongs to the glycosyl hydrolase 16 family. XTH group 2 subfamily. In terms of processing, contains at least one intrachain disulfide bond essential for its enzymatic activity. Root specific.

Its subcellular location is the secreted. It localises to the cell wall. It is found in the extracellular space. The protein resides in the apoplast. It carries out the reaction breaks a beta-(1-&gt;4) bond in the backbone of a xyloglucan and transfers the xyloglucanyl segment on to O-4 of the non-reducing terminal glucose residue of an acceptor, which can be a xyloglucan or an oligosaccharide of xyloglucan.. Its function is as follows. Catalyzes xyloglucan endohydrolysis (XEH) and/or endotransglycosylation (XET). Cleaves and religates xyloglucan polymers, an essential constituent of the primary cell wall, and thereby participates in cell wall construction of growing tissues. This Arabidopsis thaliana (Mouse-ear cress) protein is Probable xyloglucan endotransglucosylase/hydrolase protein 12 (XTH12).